A 364-amino-acid chain; its full sequence is Histidinol-phosphate aminotransferase (364 aa).

K220 is modified (N6-(pyridoxal phosphate)lysine).

Belongs to the class-II pyridoxal-phosphate-dependent aminotransferase family. Histidinol-phosphate aminotransferase subfamily. In terms of assembly, homodimer. Requires pyridoxal 5'-phosphate as cofactor.

The enzyme catalyses L-histidinol phosphate + 2-oxoglutarate = 3-(imidazol-4-yl)-2-oxopropyl phosphate + L-glutamate. It functions in the pathway amino-acid biosynthesis; L-histidine biosynthesis; L-histidine from 5-phospho-alpha-D-ribose 1-diphosphate: step 7/9. In Stenotrophomonas maltophilia (strain R551-3), this protein is Histidinol-phosphate aminotransferase.